The primary structure comprises 312 residues: Beta-ketoacyl-[acyl-carrier-protein] synthase III (312 aa).

Residues Cys-112 and His-237 contribute to the active site. The ACP-binding stretch occupies residues 238–242 (QANIR). Asn-267 is a catalytic residue.

This sequence belongs to the thiolase-like superfamily. FabH family. As to quaternary structure, homodimer.

It localises to the cytoplasm. It carries out the reaction malonyl-[ACP] + acetyl-CoA + H(+) = 3-oxobutanoyl-[ACP] + CO2 + CoA. Its pathway is lipid metabolism; fatty acid biosynthesis. Its function is as follows. Catalyzes the condensation reaction of fatty acid synthesis by the addition to an acyl acceptor of two carbons from malonyl-ACP. Catalyzes the first condensation reaction which initiates fatty acid synthesis and may therefore play a role in governing the total rate of fatty acid production. Possesses both acetoacetyl-ACP synthase and acetyl transacylase activities. Its substrate specificity determines the biosynthesis of branched-chain and/or straight-chain of fatty acids. This is Beta-ketoacyl-[acyl-carrier-protein] synthase III from Listeria welshimeri serovar 6b (strain ATCC 35897 / DSM 20650 / CCUG 15529 / CIP 8149 / NCTC 11857 / SLCC 5334 / V8).